The sequence spans 165 residues: Glucosamine 6-phosphate N-acetyltransferase (165 aa).

One can recognise an N-acetyltransferase domain in the interval 22–165 (FKVRPLAKDD…DDCNFMTQRF (144 aa)). Substrate-binding positions include threonine 44, 92 to 95 (KFIH), and 104 to 106 (EDV). Position 114–119 (114–119 (RQKLGA)) interacts with acetyl-CoA. Residues 135–136 (YK) and arginine 164 each bind substrate.

The protein belongs to the acetyltransferase family. GNA1 subfamily.

It catalyses the reaction D-glucosamine 6-phosphate + acetyl-CoA = N-acetyl-D-glucosamine 6-phosphate + CoA + H(+). Its pathway is nucleotide-sugar biosynthesis; UDP-N-acetyl-alpha-D-glucosamine biosynthesis; N-acetyl-alpha-D-glucosamine 1-phosphate from alpha-D-glucosamine 6-phosphate (route I): step 1/2. The sequence is that of Glucosamine 6-phosphate N-acetyltransferase (gna-1) from Caenorhabditis elegans.